The following is a 550-amino-acid chain: Arginine--tRNA ligase (550 aa).

The 'HIGH' region signature appears at alanine 130 to glycine 140.

It belongs to the class-I aminoacyl-tRNA synthetase family. As to quaternary structure, monomer.

The protein localises to the cytoplasm. The catalysed reaction is tRNA(Arg) + L-arginine + ATP = L-arginyl-tRNA(Arg) + AMP + diphosphate. The chain is Arginine--tRNA ligase from Corynebacterium glutamicum (strain R).